We begin with the raw amino-acid sequence, 241 residues long: Uridylate kinase (241 aa).

12–15 contacts ATP; that stretch reads KISG. The tract at residues 20 to 25 is involved in allosteric activation by GTP; the sequence is GEKGTG. UMP is bound at residue G54. ATP contacts are provided by G55 and R59. UMP is bound by residues D74 and 135 to 142; that span reads TGNPYFST. ATP-binding residues include N163, Y169, and D172.

It belongs to the UMP kinase family. In terms of assembly, homohexamer.

The protein resides in the cytoplasm. The enzyme catalyses UMP + ATP = UDP + ADP. It participates in pyrimidine metabolism; CTP biosynthesis via de novo pathway; UDP from UMP (UMPK route): step 1/1. With respect to regulation, allosterically activated by GTP. Inhibited by UTP. Catalyzes the reversible phosphorylation of UMP to UDP. This is Uridylate kinase from Lactobacillus delbrueckii subsp. bulgaricus (strain ATCC 11842 / DSM 20081 / BCRC 10696 / JCM 1002 / NBRC 13953 / NCIMB 11778 / NCTC 12712 / WDCM 00102 / Lb 14).